The following is a 203-amino-acid chain: Urease accessory protein UreG (203 aa).

Position 14–21 (14–21 (GPVGSGKT)) interacts with GTP.

It belongs to the SIMIBI class G3E GTPase family. UreG subfamily. As to quaternary structure, homodimer. UreD, UreF and UreG form a complex that acts as a GTP-hydrolysis-dependent molecular chaperone, activating the urease apoprotein by helping to assemble the nickel containing metallocenter of UreC. The UreE protein probably delivers the nickel.

Its subcellular location is the cytoplasm. Its function is as follows. Facilitates the functional incorporation of the urease nickel metallocenter. This process requires GTP hydrolysis, probably effectuated by UreG. This chain is Urease accessory protein UreG, found in Rhizobium etli (strain ATCC 51251 / DSM 11541 / JCM 21823 / NBRC 15573 / CFN 42).